Consider the following 1163-residue polypeptide: Reticulon-4 (1163 aa).

An N-acetylmethionine modification is found at methionine 1. Disordered stretches follow at residues 1-184 (MEDI…AASE) and 244-270 (SAVS…RATN). The Cytoplasmic portion of the chain corresponds to 1–989 (MEDIDQSSLV…LYWRDIKKTG (989 aa)). Phosphoserine is present on residues serine 7 and serine 16. Over residues 7 to 16 (SSLVSSSTDS) the composition is skewed to low complexity. A compositionally biased stretch (acidic residues) spans 31 to 55 (EPEDEEDEEEEEDEEEDDEDLEELE). The span at 62–79 (AAGLSAAAVPPAAAAPLL) shows a compositional bias: low complexity. Residues 87 to 101 (PPAPRGPLPAAPPAA) are compositionally biased toward pro residues. Serine 107 is subject to Phosphoserine. Pro residues predominate over residues 138-147 (ARPPPPPPAG). 3 positions are modified to phosphoserine: serine 149, serine 169, and serine 171. A phosphoserine mark is found at serine 329, serine 333, and serine 343. The residue at position 347 (threonine 347) is a Phosphothreonine. Positions 406 to 423 (DSLEQKSLGKDSEGRNED) are enriched in basic and acidic residues. Disordered stretches follow at residues 406 to 437 (DSLE…KDSS) and 454 to 474 (TANT…DEKK). Serine 425 carries the phosphoserine modification. Residue threonine 429 is modified to Phosphothreonine. A compositionally biased stretch (basic and acidic residues) spans 461–474 (LEDHTSENKTDEKK). 5 positions are modified to phosphoserine: serine 488, serine 689, serine 726, serine 766, and serine 830. A Phosphothreonine modification is found at threonine 832. Phosphoserine is present on residues serine 855, serine 922, and serine 962. Residues 976-1163 (VVDLLYWRDI…KIPGLKRKAD (188 aa)) form the Reticulon domain. A helical transmembrane segment spans residues 990-1010 (VVFGASLFLLLSLTVFSIVSV). Residues 1011–1104 (TAYIALALLS…LMWVFTYVGA (94 aa)) lie on the Lumenal side of the membrane. N6-acetyllysine is present on lysine 1075. Residues 1105–1125 (LFNGLTLLILALISLFSIPVI) form a helical membrane-spanning segment. At 1126–1163 (YERHQVQIDHYLGLANKSVKDAMAKIQAKIPGLKRKAD) the chain is on the cytoplasmic side.

In terms of assembly, binds to RTN4R. Interacts with ATL1. Interacts with TMEM170A. Interacts with RTN4IP1. Interacts in trans with CNTNAP1. Interacts with REEP5. Interacts with synaptic plasticity regulator PANTS; the interaction results in enhanced RTN4-mediated inhibition of AMPA receptor clustering. Interacts with GPR50. As to quaternary structure, homodimer. Interacts with BAD/Bcl-xl and BCL2. Interact with RTN3. Interacts with NGBR. Interacts with SPTLC1. Interacts with GRAMD4. Interacts with CDH5. Interacts with BACE1 and BACE2. Interacts with REEP5. Interacts with RETREG3. In terms of assembly, interacts with BACE1 and BACE2. Interacts with TMEM33. In terms of tissue distribution, isoforms A, B and C are present in optic nerve, spinal cord and cerebral cortex. Isoforms A and B are present in dorsal root ganglion, sciatic nerve and PC12 cells after longer exposure. Isoforms B and C are detected in kidney, cartilage, skin, lung and spleen. Isoform C is expressed at high level in skeletal muscle. In adult animals isoform A is expressed mainly in the nervous system.

It localises to the endoplasmic reticulum membrane. It is found in the cell membrane. Its subcellular location is the synapse. The protein localises to the cell junction. Required to induce the formation and stabilization of endoplasmic reticulum (ER) tubules. They regulate membrane morphogenesis in the ER by promoting tubular ER production. They influence nuclear envelope expansion, nuclear pore complex formation and proper localization of inner nuclear membrane proteins. However each isoform have specific functions mainly depending on their tissue expression specificities. Functionally, developmental neurite growth regulatory factor with a role as a negative regulator of axon-axon adhesion and growth, and as a facilitator of neurite branching. Regulates neurite fasciculation, branching and extension in the developing nervous system. Involved in down-regulation of growth, stabilization of wiring and restriction of plasticity in the adult CNS. Regulates the radial migration of cortical neurons via an RTN4R-LINGO1 containing receptor complex. Acts as a negative regulator of central nervous system angiogenesis. Inhibits spreading, migration and sprouting of primary brain microvascular endothelial cells (MVECs). Also induces the retraction of MVECs lamellipodia and filopodia in a ROCK pathway-dependent manner. In terms of biological role, mainly function in endothelial cells and vascular smooth muscle cells, is also involved in immune system regulation. Modulator of vascular remodeling, promotes the migration of endothelial cells but inhibits the migration of vascular smooth muscle cells. Regulates endothelial sphingolipid biosynthesis with direct effects on vascular function and blood pressure. Inhibits serine palmitoyltransferase, SPTLC1, the rate-limiting enzyme of the novo sphingolipid biosynthetic pathway, thereby controlling production of endothelial sphingosine-1-phosphate (S1P). Required to promote macrophage homing and functions such as cytokine/chemokine gene expression involved in angiogenesis, arteriogenesis and tissue repair. Mediates ICAM1 induced transendothelial migration of leukocytes such as monocytes and neutrophils and acute inflammation. Necessary for immune responses triggered by nucleic acid sensing TLRs, such as TLR9, is required for proper TLR9 location to endolysosomes. Also involved in immune response to LPS. Plays a role in liver regeneration through the modulation of hepatocytes proliferation. Reduces the anti-apoptotic activity of Bcl-xl and Bcl-2. This is likely consecutive to their change in subcellular location, from the mitochondria to the endoplasmic reticulum, after binding and sequestration. With isoform C, inhibits BACE1 activity and amyloid precursor protein processing. Its function is as follows. Regulates cardiomyocyte apoptosis upon hypoxic conditions. With isoform B, inhibits BACE1 activity and amyloid precursor protein processing. This Rattus norvegicus (Rat) protein is Reticulon-4 (Rtn4).